The following is a 58-amino-acid chain: Photosystem II reaction center protein K (58 aa).

Positions 1–21 are excised as a propeptide; it reads MLVISNVYPSNLFTLINPFFA. A helical transmembrane segment spans residues 29-49; the sequence is IFDPIVDVMPIIPVFFFLLAF.

Belongs to the PsbK family. In terms of assembly, PSII is composed of 1 copy each of membrane proteins PsbA, PsbB, PsbC, PsbD, PsbE, PsbF, PsbH, PsbI, PsbJ, PsbK, PsbL, PsbM, PsbT, PsbX, PsbY, PsbZ, Psb30/Ycf12, at least 3 peripheral proteins of the oxygen-evolving complex and a large number of cofactors. It forms dimeric complexes.

The protein localises to the plastid. Its subcellular location is the chloroplast thylakoid membrane. Functionally, one of the components of the core complex of photosystem II (PSII). PSII is a light-driven water:plastoquinone oxidoreductase that uses light energy to abstract electrons from H(2)O, generating O(2) and a proton gradient subsequently used for ATP formation. It consists of a core antenna complex that captures photons, and an electron transfer chain that converts photonic excitation into a charge separation. The protein is Photosystem II reaction center protein K of Psilotum nudum (Whisk fern).